The primary structure comprises 326 residues: Phospholipid scramblase 4 (326 aa).

Residues 1-32 (MSGLVPTAPEQPTEEMENQIKSPTAVPDAPPD) are disordered. The tract at residues 1 to 94 (MSGLVPTAPE…PVTNQPAPIM (94 aa)) is proline-rich domain (PRD). Residues 1 to 299 (MSGLVPTAPE…IRFPLALDVK (299 aa)) are Cytoplasmic-facing. The SH3-binding 1 motif lies at 18 to 25 (NQIKSPTA). A PPxY motif motif is present at residues 30-33 (PPDY). Residues 41–49 (PAGPVASPS) carry the SH3-binding 2 motif. Phosphotyrosine; by ABL occurs at positions 79 and 84. An SH3-binding 3 motif is present at residues 94 to 102 (MWMAGPAPV). 5 S-palmitoyl cysteine lipidation sites follow: cysteine 193, cysteine 194, cysteine 195, cysteine 197, and cysteine 198. The chain crosses the membrane as a helical span at residues 300–316 (MKAMIFGSCFLIDFMYF). Residues 317–326 (ERPPPRRMSR) are Extracellular-facing.

Belongs to the phospholipid scramblase family. Interacts with PDCD6. Interacts with KPNA2; this interaction mediates the nucleus import of PLSCR4. Ca(2+) serves as cofactor. Mg(2+) is required as a cofactor. Requires Zn(2+) as cofactor.

It localises to the cell membrane. The protein resides in the nucleus. It catalyses the reaction a 1,2-diacyl-sn-glycero-3-phosphocholine(in) = a 1,2-diacyl-sn-glycero-3-phosphocholine(out). It carries out the reaction a 1,2-diacyl-sn-glycero-3-phospho-L-serine(in) = a 1,2-diacyl-sn-glycero-3-phospho-L-serine(out). In terms of biological role, catalyzes metal ion-induced ATP-independent rapid bidirectional and non-specific movement of phospholipids (lipid scrambling or lipid flip-flop) between the inner and outer leaflet of the plasma membrane and participates in the redistribution of phospholipids between membrane leaflets. Metal ions bind to the calcium-binding site and induce conformation change in the protein. Has a greater affi nity for Ca(2+) than Mg(2+) and Zn(2+). This Mus musculus (Mouse) protein is Phospholipid scramblase 4.